Reading from the N-terminus, the 33-residue chain is Beta-amanitin proprotein (33 aa).

A propeptide spanning residues 1-10 (MSDINATRLP) is cleaved from the precursor. A cross-link (cyclopeptide (Ile-Pro)) is located at residues 11 to 18 (IWGIGCDP). A cross-link (2'-cysteinyl-6'-hydroxytryptophan sulfoxide (Trp-Cys)) is located at residues 12–16 (WGIGC). Positions 19 to 33 (CVGDEVTALLTRGEA) are excised as a propeptide.

It belongs to the MSDIN fungal toxin family. Processed by the macrocyclase-peptidase enzyme POPB to yield a toxic cyclic decapeptide. POPB first removes 10 residues from the N-terminus. Conformational trapping of the remaining peptide forces the enzyme to release this intermediate rather than proceed to macrocyclization. The enzyme rebinds the remaining peptide in a different conformation and catalyzes macrocyclization of the N-terminal 8 residues.

In terms of biological role, toxin belonging to the bicyclic octapeptides amatoxins that acts by binding non-competitively to RNA polymerase II and greatly slowing the elongation of transcripts from target promoters. The polypeptide is Beta-amanitin proprotein (Amanita fuligineoides).